The sequence spans 397 residues: Flavohemoprotein A (397 aa).

In terms of domain architecture, Globin spans 2 to 137; sequence SLSQQSISII…IAQAFIDAEA (136 aa). H84 serves as a coordination point for heme b. Residues Y94 and E136 each act as charge relay system in the active site. The reductase stretch occupies residues 150 to 397; the sequence is WRDTREFIVD…YEIFGPLTNV (248 aa). The FAD-binding FR-type domain maps to 151–266; sequence RDTREFIVDR…SPPAGDYVVD (116 aa). FAD contacts are provided by residues Y189 and 208–211; that span reads RHYS. Residue 279-284 coordinates NADP(+); sequence GVGITP. 390-393 serves as a coordination point for FAD; the sequence is IFGP.

It belongs to the globin family. Two-domain flavohemoproteins subfamily. In the C-terminal section; belongs to the flavoprotein pyridine nucleotide cytochrome reductase family. FAD is required as a cofactor. The cofactor is heme b.

It is found in the cytoplasm. The enzyme catalyses 2 nitric oxide + NADPH + 2 O2 = 2 nitrate + NADP(+) + H(+). It carries out the reaction 2 nitric oxide + NADH + 2 O2 = 2 nitrate + NAD(+) + H(+). Its function is as follows. Is involved in NO detoxification in an aerobic process, termed nitric oxide dioxygenase (NOD) reaction that utilizes O(2) and NAD(P)H to convert NO to nitrate, which protects the cell from various noxious nitrogen compounds. Therefore, plays a central role in the inducible response to nitrosative stress. In terms of biological role, in the presence of oxygen and NADH, it has NADH oxidase activity, which leads to the generation of superoxide and H(2)O(2). Under anaerobic conditions, it also exhibits nitric oxide reductase and FAD reductase activities. However, all these reactions are much lower than NOD activity. In Dictyostelium discoideum (Social amoeba), this protein is Flavohemoprotein A (fhbA).